An 88-amino-acid chain; its full sequence is Small ribosomal subunit protein bS20 (88 aa).

It belongs to the bacterial ribosomal protein bS20 family.

Functionally, binds directly to 16S ribosomal RNA. This is Small ribosomal subunit protein bS20 from Methylorubrum populi (strain ATCC BAA-705 / NCIMB 13946 / BJ001) (Methylobacterium populi).